Consider the following 141-residue polypeptide: Hemoglobin subunit alpha (141 aa).

A Globin domain is found at 1–141 (VLSPADKTNL…VSTVLTSKYR (141 aa)). The residue at position 3 (S3) is a Phosphoserine. An N6-succinyllysine modification is found at K7. T8 carries the post-translational modification Phosphothreonine. Residue K11 is modified to N6-succinyllysine. Residue K16 is modified to N6-acetyllysine; alternate. K16 carries the N6-succinyllysine; alternate modification. At Y24 the chain carries Phosphotyrosine. K40 is subject to N6-succinyllysine. Position 49 is a phosphoserine (S49). Residue H58 coordinates O2. Residue H87 participates in heme b binding. A Phosphoserine modification is found at S102. Position 108 is a phosphothreonine (T108). At S124 the chain carries Phosphoserine. 2 positions are modified to phosphothreonine: T134 and T137. S138 carries the post-translational modification Phosphoserine.

It belongs to the globin family. Heterotetramer of two alpha chains and two beta chains. In terms of tissue distribution, red blood cells.

In terms of biological role, involved in oxygen transport from the lung to the various peripheral tissues. The polypeptide is Hemoglobin subunit alpha (Tamias striatus (Eastern chipmunk)).